The primary structure comprises 305 residues: Protoheme IX farnesyltransferase 2 (305 aa).

The next 8 membrane-spanning stretches (helical) occupy residues 38-58 (LITT…SFLG), 60-80 (INTV…SCAI), 115-135 (ILLV…AAVI), 157-177 (INTV…WTAV), 181-201 (IGVV…PHFL), 227-247 (VTKR…FFLG), 249-269 (LGLP…ILGL), and 285-305 (FVYS…LTLF).

The protein belongs to the UbiA prenyltransferase family. Protoheme IX farnesyltransferase subfamily. In terms of assembly, interacts with CtaA.

It is found in the cell membrane. The catalysed reaction is heme b + (2E,6E)-farnesyl diphosphate + H2O = Fe(II)-heme o + diphosphate. It participates in porphyrin-containing compound metabolism; heme O biosynthesis; heme O from protoheme: step 1/1. In terms of biological role, converts heme B (protoheme IX) to heme O by substitution of the vinyl group on carbon 2 of heme B porphyrin ring with a hydroxyethyl farnesyl side group. The polypeptide is Protoheme IX farnesyltransferase 2 (ctaB2) (Bacillus subtilis (strain 168)).